The chain runs to 565 residues: NAD-dependent malic enzyme (565 aa).

Catalysis depends on Tyr-104, which acts as the Proton donor. Arg-157 serves as a coordination point for NAD(+). Residue Lys-175 is the Proton acceptor of the active site. The a divalent metal cation site is built by Glu-246, Asp-247, and Asp-270. Residues Asp-270 and Asn-418 each coordinate NAD(+).

This sequence belongs to the malic enzymes family. Homotetramer. Requires Mg(2+) as cofactor. Mn(2+) serves as cofactor.

It carries out the reaction (S)-malate + NAD(+) = pyruvate + CO2 + NADH. It catalyses the reaction oxaloacetate + H(+) = pyruvate + CO2. The protein is NAD-dependent malic enzyme of Proteus mirabilis (strain HI4320).